Consider the following 725-residue polypeptide: Probable alpha-galactosidase G (725 aa).

An N-linked (GlcNAc...) asparagine glycan is attached at N407. The active-site Nucleophile is D484. Residue N490 is glycosylated (N-linked (GlcNAc...) asparagine). D546 (proton donor) is an active-site residue. An N-linked (GlcNAc...) asparagine glycan is attached at N672.

This sequence belongs to the glycosyl hydrolase 36 family. As to quaternary structure, homotetramer. It depends on Mg(2+) as a cofactor. NAD(+) is required as a cofactor.

It is found in the secreted. The catalysed reaction is Hydrolysis of terminal, non-reducing alpha-D-galactose residues in alpha-D-galactosides, including galactose oligosaccharides, galactomannans and galactolipids.. In terms of biological role, hydrolyzes a variety of simple alpha-D-galactoside as well as more complex molecules such as oligosaccharides and polysaccharides. This chain is Probable alpha-galactosidase G (aglG), found in Aspergillus terreus (strain NIH 2624 / FGSC A1156).